The sequence spans 477 residues: Ribulose bisphosphate carboxylase large chain (477 aa).

A propeptide spanning residues 1–2 (MS) is cleaved from the precursor. At Pro3 the chain carries N-acetylproline. Lys14 carries the N6,N6,N6-trimethyllysine modification. Positions 123 and 173 each coordinate substrate. Lys175 acts as the Proton acceptor in catalysis. Lys177 contributes to the substrate binding site. Residues Lys201, Asp203, and Glu204 each contribute to the Mg(2+) site. Lys201 carries the N6-carboxylysine modification. His294 acts as the Proton acceptor in catalysis. Arg295, His327, and Ser379 together coordinate substrate.

The protein belongs to the RuBisCO large chain family. Type I subfamily. In terms of assembly, heterohexadecamer of 8 large chains and 8 small chains; disulfide-linked. The disulfide link is formed within the large subunit homodimers. Mg(2+) serves as cofactor. Post-translationally, the disulfide bond which can form in the large chain dimeric partners within the hexadecamer appears to be associated with oxidative stress and protein turnover.

It localises to the plastid. The protein localises to the chloroplast. The catalysed reaction is 2 (2R)-3-phosphoglycerate + 2 H(+) = D-ribulose 1,5-bisphosphate + CO2 + H2O. It carries out the reaction D-ribulose 1,5-bisphosphate + O2 = 2-phosphoglycolate + (2R)-3-phosphoglycerate + 2 H(+). Functionally, ruBisCO catalyzes two reactions: the carboxylation of D-ribulose 1,5-bisphosphate, the primary event in carbon dioxide fixation, as well as the oxidative fragmentation of the pentose substrate in the photorespiration process. Both reactions occur simultaneously and in competition at the same active site. This Manihot esculenta (Cassava) protein is Ribulose bisphosphate carboxylase large chain.